A 70-amino-acid polypeptide reads, in one-letter code: Probable ferredoxin TA0517 (70 aa).

4Fe-4S ferredoxin-type domains lie at Thr8–Glu36 and Thr37–Phe66. [4Fe-4S] cluster-binding residues include Cys17, Cys20, Cys23, Cys27, Cys46, Cys49, Cys52, and Cys56.

It depends on [4Fe-4S] cluster as a cofactor.

Functionally, ferredoxins are iron-sulfur proteins that transfer electrons in a wide variety of metabolic reactions. This chain is Probable ferredoxin TA0517, found in Thermoplasma acidophilum (strain ATCC 25905 / DSM 1728 / JCM 9062 / NBRC 15155 / AMRC-C165).